The primary structure comprises 250 residues: Ribosomal RNA-processing protein 15 (250 aa).

Basic and acidic residues predominate over residues 1 to 27 (MGSKHRVDTKDKKRTRKNAEFGREKRN). A disordered region spans residues 1–101 (MGSKHRVDTK…NSKHDDGSTG (101 aa)). 2 stretches are compositionally biased toward acidic residues: residues 43–53 (MEGDEAEEDEQ) and 67–83 (EQSDAEEDDDEEEEDDD). Serine 69 is modified (phosphoserine).

It belongs to the RRP15 family.

It is found in the nucleus. It localises to the nucleolus. Its function is as follows. Constituent of pre-60S ribosomal particles. Required for large subunit rRNA maturation, in particular processing of the 27S pre-rRNA at the A3 and B1 sites to yield 5.8S and 25S rRNA. The chain is Ribosomal RNA-processing protein 15 from Saccharomyces cerevisiae (strain ATCC 204508 / S288c) (Baker's yeast).